Reading from the N-terminus, the 1029-residue chain is Tyrosine-protein kinase-like otk (1029 aa).

A signal peptide spans 1-18 (MISIYGLVMALMMASVLA). The Extracellular portion of the chain corresponds to 19 to 577 (SSSRFQRVPQ…GGDGFLVTRA (559 aa)). 5 Ig-like C2-type domains span residues 21–104 (SRFQ…REAS), 105–195 (PPAK…RVMS), 247–361 (PEDL…APIS), 364–459 (PGIL…VAIN), and 464–554 (PKFS…VQLV). Asn35 carries N-linked (GlcNAc...) asparagine glycosylation. 4 disulfide bridges follow: Cys42-Cys91, Cys133-Cys184, Cys272-Cys350, and Cys395-Cys443. N-linked (GlcNAc...) asparagine glycosylation is found at Asn332, Asn413, Asn425, Asn440, Asn453, Asn508, and Asn520. Residues Cys486 and Cys538 are joined by a disulfide bond. The chain crosses the membrane as a helical span at residues 578–598 (VLITMTVALAYIVLVVGLMLW). Topologically, residues 599 to 1029 (CRYRRQARKA…LSKAMQIAEK (431 aa)) are cytoplasmic. Disordered regions lie at residues 613 to 675 (LSTK…KKSA) and 714 to 756 (SPSD…KTSM). Positions 651-669 (KSSGDAQKSDDTACSQQSR) are enriched in polar residues. A Phosphoserine modification is found at Ser674. The 337-residue stretch at 688-1024 (LSELIQIGRG…QLGAALSKAM (337 aa)) folds into the Protein kinase; inactive domain. Residues 716–727 (SDKDADTEKQHS) show a composition bias toward basic and acidic residues.

The protein belongs to the protein kinase superfamily. Tyr protein kinase family. Insulin receptor subfamily. Interacts with plexA; component of a receptor complex that mediates the repulsive signaling in response to Semaphorin ligands.

It is found in the cell membrane. Functionally, acts as a calcium-dependent, homophilic cell adhesion molecule that regulates neural recognition during the development of the nervous system. Component of the repulsive Plexin signaling response to regulate motor axon guidance at the embryonic stage. Also component of a receptor complex that is required in the adult visual system to innervate the lamina layer; specific targeting of R1-R6 axons. The polypeptide is Tyrosine-protein kinase-like otk (Drosophila sechellia (Fruit fly)).